We begin with the raw amino-acid sequence, 359 residues long: Mitochondrial glutathione transporter SLC25A39 (359 aa).

Residues 1 to 14 (MADQDPGGISPLQQ) lie on the Mitochondrial intermembrane side of the membrane. 3 Solcar repeats span residues 9–151 (ISPL…LKAF), 159–243 (SDLY…VKSW), and 253–347 (TSVG…GKNF). A helical membrane pass occupies residues 15–35 (MVASGAGAVVTSLFMTPLDVV). Residues 36–121 (KVRLQSQRPS…VKIVRHEGTR (86 aa)) are Mitochondrial matrix-facing. Cys-74, Cys-78, Cys-88, and Cys-94 together coordinate [2Fe-2S] cluster. The helical transmembrane segment at 122–142 (TLWSGLPATLVMTVPATAAYF) threads the bilayer. Over 143 to 164 (TAYDQLKAFLCGRALTSDLYAP) the chain is Mitochondrial intermembrane. The helical transmembrane segment at 165–185 (MVAGALARLGTVTVISPLELV) threads the bilayer. Over 186-214 (RTKLQAQHLSYRELGTCVRAAVAQGGWRS) the chain is Mitochondrial matrix. Residues 215 to 235 (LWLGWGPTALRDVPFSALYWF) traverse the membrane as a helical segment. The Mitochondrial intermembrane segment spans residues 236–255 (NYELVKSWLSGLRPKDQTSV). The chain crosses the membrane as a helical span at residues 256–276 (GISFVAGGISGMVAATLTLPF). The Mitochondrial matrix portion of the chain corresponds to 277–317 (DVVKTQRQVALGAVEALRVMPLNTDSTWLLLRRILAESGTR). The chain crosses the membrane as a helical span at residues 318 to 338 (GLFAGFLPRIIKAAPSCAIMI). Residues 339-359 (STYEFGKNFFQRLNREQLLSP) are Mitochondrial intermembrane-facing.

This sequence belongs to the mitochondrial carrier (TC 2.A.29) family. Cleaved and degraded by AFG3L2; degradation by AFG3L2 is regulated by the ability of SLC25A39 to bind iron-sulfur. In absence of mitochondrial glutathione, SLC25A39 binds iron-sulfur, preventing cleavage and degradation by AFG3L2. The presence of mitochondrial glutathione prevents iron-sulfur-binding to SLC25A39, promoting cleavage and degradation by AFG3L2.

It localises to the mitochondrion inner membrane. It carries out the reaction glutathione(in) = glutathione(out). With respect to regulation, the activity of SLC25A39 is regulated by levels of mitochondrial glutathione via its ability to bind [2Fe-2S] iron-sulfur cluster. Upon physiological levels of mitochondrial glutathione, glutathione prevents iron-sulfur-binding to SLC25A39 promoting cleavage and degradation by AFG3L2. Upon depletion of mitochondrial glutathione, SLC25A39 binds iron-sulfur, preventing cleavage and degradation by AFG3L2. In terms of biological role, mitochondrial transporter required for glutathione import into mitochondria. Glutathione, which plays key roles in oxidative metabolism, is produced exclusively in the cytosol and is imported in many organelles. Mitochondrial glutathione is required for the activity and stability of proteins containing iron-sulfur clusters, as well as erythropoiesis. The chain is Mitochondrial glutathione transporter SLC25A39 (SLC25A39) from Bos taurus (Bovine).